We begin with the raw amino-acid sequence, 70 residues long: Brevinin-1PLb (70 aa).

The N-terminal stretch at 1-22 (MFTTKKSMLLLFFLGTINLSLC) is a signal peptide. Residues 23 to 44 (EEERNAEEERRDEPDEMNVEVE) constitute a propeptide that is removed on maturation. Cysteines 64 and 70 form a disulfide.

As to expression, expressed by the skin glands.

Its subcellular location is the secreted. In terms of biological role, antimicrobial activity against the Gram-negative bacterium E.coli, the Gram-positive bacterium S.aureus and the yeast C.albicans. The protein is Brevinin-1PLb of Lithobates palustris (Pickerel frog).